A 797-amino-acid polypeptide reads, in one-letter code: Plakophilin-3 (797 aa).

Residues glycine 58 to arginine 81 are disordered. At arginine 81 the chain carries Omega-N-methylarginine. Serine 123, serine 180, and serine 183 each carry phosphoserine. A Phosphotyrosine modification is found at tyrosine 195. Low complexity predominate over residues alanine 219–glycine 228. Residues alanine 219–arginine 241 form a disordered region. Phosphoserine is present on serine 240. Threonine 250 is modified (phosphothreonine). A disordered region spans residues arginine 253–proline 274. Arginine 261 carries the post-translational modification Omega-N-methylarginine. A required for interaction with SFN region spans residues serine 283–leucine 288. 4 positions are modified to phosphoserine: serine 285, serine 313, serine 314, and serine 331. Residues leucine 294 to valine 724 form a required for interaction with GSK3B region. ARM repeat units follow at residues glycine 305–tyrosine 348, alanine 351–tyrosine 390, valine 393–serine 432, threonine 449–serine 487, alanine 491–tyrosine 536, proline 596–alanine 637, valine 645–arginine 684, and lysine 689–valine 730. A required for binding to PKP2 mRNA region spans residues valine 516–proline 797.

It belongs to the beta-catenin family. In terms of assembly, found in a complex composed of CDH1, RAP1A and PKP3; PKP3 acts as a scaffold protein within the complex, the complex is required for CDH1 localization to mature desmosome cell junctions. Interacts with FXR1; the interaction facilitates the binding of PKP3 to PKP2 mRNA. Interacts (via ARM repeats) with GSK3B; the interaction may be involved in PKP3 protein degradation. Interacts with hyperphosphorylated and hypophosphorylated RB1; the interaction inhibits RB1 interaction with and repression of the transcription factor E2F1, potentially via sequestering RB1 to the cytoplasm. Interacts with CDKN1A; the interaction sequesters CDKN1A to the cytoplasm thereby repressing its role as an inhibitor of CDK4- and CDK6-driven RB1 phosphorylation. Interacts (via N-terminus) with SFN; the interaction maintains the cytoplasmic pool of PKP3, facilitates PKP3 exchange at desmosomes and restricts PKP3 localization to existing desmosome cell junctions. Interacts (via N-terminus) with JUP; the interaction is required for PKP3 localization to desmosome cell-cell junctions. Post-translationally, phosphorylated at Ser-285 when localized to the cytoplasm, PKP3 at desmosome cell junctions is not phosphorylated. Phosphorylation at Try-195 by SRC is induced by reactive oxygen species and potentially acts as a release mechanism from desmosome cell-cell junctions. As to expression, expressed in all layers of the epidermis, but is most abundant in the basal layer (at protein level). Expressed in keratinocytes of the epidermis at birth (at protein level). Expressed in the anagen non-keratinized inner root sheath cuticle and hair cuticle (at protein level). Also expressed in the matrix, precursors of the inner root sheath and hair shaft lineages (at protein level). Expressed at apical membranes in the outer hair root sheath and basal layer keratinocytes (at protein level). Expressed in intestinal epithelial cells and lamina propria of the ileum (at protein level). Expressed in keratinocytes (at protein level).

It localises to the nucleus. The protein localises to the cell junction. Its subcellular location is the desmosome. The protein resides in the cytoplasm. It is found in the cell membrane. It localises to the adherens junction. Functionally, a component of desmosome cell-cell junctions which are required for positive regulation of cellular adhesion. Required for the localization of DSG2, DSP and PKP2 to mature desmosome junctions. May also play a role in the maintenance of DSG3 protein abundance in keratinocytes. Required for the formation of DSP-containing desmosome precursors in the cytoplasm during desmosome assembly. Also regulates the accumulation of CDH1 to mature desmosome junctions, via cAMP-dependent signaling and its interaction with activated RAP1A. Positively regulates the stabilization of PKP2 mRNA and therefore protein abundance, via its interaction with FXR1, may also regulate the protein abundance of DSP via the same mechanism. May also regulate the protein abundance of the desmosome component PKP1. Required for the organization of desmosome junctions at intercellular borders between basal keratinocytes of the epidermis, as a result plays a role in maintenance of the dermal barrier and regulation of the dermal inflammatory response. Required during epidermal keratinocyte differentiation for cell adherence at tricellular cell-cell contacts, via regulation of the timely formation of adherens junctions and desmosomes in a calcium-dependent manner, and may also play a role in the organization of the intracellular actin fiber belt. Acts as a negative regulator of the inflammatory response in hematopoietic cells of the skin and intestine, via modulation of proinflammatory cytokine production. Important for epithelial barrier maintenance in the intestine to reduce intestinal permeability, thereby plays a role in protection from intestinal-derived endotoxemia. Required for the development of hair follicles, via a role in the regulation of inner root sheaf length, correct alignment and anterior-posterior polarity of hair follicles. Promotes proliferation and cell-cycle G1/S phase transition of keratinocytes. Promotes E2F1-driven transcription of G1/S phase promoting genes by acting to release E2F1 from its inhibitory interaction with RB1, via sequestering RB1 and CDKN1A to the cytoplasm and thereby increasing CDK4- and CDK6-driven phosphorylation of RB1. May act as a scaffold protein to facilitate MAPK phosphorylation of RPS6KA protein family members and subsequently promote downstream EGFR signaling. May play a role in the positive regulation of transcription of Wnt-mediated TCF-responsive target genes. The sequence is that of Plakophilin-3 (Pkp3) from Mus musculus (Mouse).